Here is a 366-residue protein sequence, read N- to C-terminus: MSGNTLGTLFTVTTFGESHGPAIGCVIDGCPPGMSLTEADIQAELDRRKPGTSRHVTQRQEADEVEILSGVFEGVTTGTPIALLIRNTDQRSKDYGNIVETFRPGHADYTYWQKYGIRDYRGGGRSSARLTAPIVGAGAVAKKWLRERFGVEVRGCMSALGEIDVPFVDWSHVRENPFFAPNAAIVPELEAYMDALRKDGDSIGARIDVVASGVPVGWGEPVFDRLDADIAKAMMSINAVKGVEIGAGFASVAERGSVHGDELTPAGFVGNHAGGVLGGISTGQDVTVSIAIKPTSSIRTPRRSITKAGEEAIVETFGRHDPCVGIRATPIAESMLALVLIDHALRHRAQCGDVETSTPKIAGSAT.

NADP(+) is bound by residues arginine 48 and arginine 54. FMN-binding positions include 125-127 (RSS), 238-239 (NA), glycine 278, 293-297 (KPTSS), and arginine 319.

It belongs to the chorismate synthase family. Homotetramer. FMNH2 serves as cofactor.

The enzyme catalyses 5-O-(1-carboxyvinyl)-3-phosphoshikimate = chorismate + phosphate. Its pathway is metabolic intermediate biosynthesis; chorismate biosynthesis; chorismate from D-erythrose 4-phosphate and phosphoenolpyruvate: step 7/7. In terms of biological role, catalyzes the anti-1,4-elimination of the C-3 phosphate and the C-6 proR hydrogen from 5-enolpyruvylshikimate-3-phosphate (EPSP) to yield chorismate, which is the branch point compound that serves as the starting substrate for the three terminal pathways of aromatic amino acid biosynthesis. This reaction introduces a second double bond into the aromatic ring system. The polypeptide is Chorismate synthase (Burkholderia vietnamiensis (strain G4 / LMG 22486) (Burkholderia cepacia (strain R1808))).